We begin with the raw amino-acid sequence, 303 residues long: Putative fimbrium subunit Fim1C (303 aa).

Residues 1–22 (MKKQALICALLATVLLPGCSED) form the signal peptide.

It belongs to the bacteroidetes fimbrillin superfamily. Mfa-like family. In terms of assembly, may be part of the fimbrial tip.

The protein localises to the fimbrium. Functionally, putative component of the fimbrium tip. Fimbriae are filamentous appendages on the cell surface that mediate cell adhesion and biofilm formation. This is Putative fimbrium subunit Fim1C (fim1C) from Bacteroides uniformis (strain ATCC 8492 / DSM 6597 / CCUG 4942 / CIP 103695 / JCM 5828 / KCTC 5204 / NCTC 13054 / VPI 0061).